The primary structure comprises 148 residues: 3-hydroxyacyl-[acyl-carrier-protein] dehydratase FabZ (148 aa).

H48 is a catalytic residue.

This sequence belongs to the thioester dehydratase family. FabZ subfamily.

Its subcellular location is the cytoplasm. It catalyses the reaction a (3R)-hydroxyacyl-[ACP] = a (2E)-enoyl-[ACP] + H2O. Functionally, involved in unsaturated fatty acids biosynthesis. Catalyzes the dehydration of short chain beta-hydroxyacyl-ACPs and long chain saturated and unsaturated beta-hydroxyacyl-ACPs. In Acinetobacter baylyi (strain ATCC 33305 / BD413 / ADP1), this protein is 3-hydroxyacyl-[acyl-carrier-protein] dehydratase FabZ.